The chain runs to 81 residues: UPF0298 protein SAK_1599 (81 aa).

Belongs to the UPF0298 family.

It is found in the cytoplasm. In Streptococcus agalactiae serotype Ia (strain ATCC 27591 / A909 / CDC SS700), this protein is UPF0298 protein SAK_1599.